The primary structure comprises 258 residues: Thyroxine 5-deiodinase (258 aa).

The chain crosses the membrane as a helical; Signal-anchor for type II membrane protein span at residues 1–20 (AACILLFPRFLLTAVMLWLL). Residues 21–258 (DFLCIRKKML…QSPGAVVIQV (238 aa)) are Extracellular-facing. The active site involves selenocysteine 122. Position 122 (selenocysteine 122) is a non-standard amino acid, selenocysteine.

It belongs to the iodothyronine deiodinase family. In terms of assembly, monomer. Homodimer. May undergo minor heretodimerization with DIO1 and DIO2.

It is found in the cell membrane. The protein resides in the endosome membrane. It catalyses the reaction 3,3',5'-triiodo-L-thyronine + iodide + A + H(+) = L-thyroxine + AH2. The catalysed reaction is 3,3'-diiodo-L-thyronine + iodide + A + H(+) = 3,3',5-triiodo-L-thyronine + AH2. The enzyme catalyses 3-iodo-L-thyronine + iodide + A + H(+) = 3,5-diiodo-L-thyronine + AH2. It carries out the reaction L-thyronine + iodide + A + H(+) = 3-iodo-L-thyronine + AH2. It catalyses the reaction 3',5'-diiodo-L-thyronine + iodide + A + H(+) = 3,3',5'-triiodo-L-thyronine + AH2. The catalysed reaction is 3'-iodo-L-thyronine + iodide + A + H(+) = 3,3'-diiodo-L-thyronine + AH2. The enzyme catalyses 3,3',5'-triiodothyronamine + iodide + A + H(+) = 3,3',5,5'-tetraiodothyronamine + AH2. It carries out the reaction 3',5'-diiodothyronamine + iodide + A + H(+) = 3,3',5'-triiodothyronamine + AH2. It catalyses the reaction 3,3'-diiodothyronamine + iodide + A + H(+) = 3,3',5-triiodothyronamine + AH2. The catalysed reaction is 3-iodothyronamine + iodide + A + H(+) = 3,5-diiodothyronamine + AH2. The enzyme catalyses 3'-iodothyronamine + iodide + A + H(+) = 3,3'-diiodothyronamine + AH2. It carries out the reaction thyronamine + iodide + A + H(+) = 3-iodothyronamine + AH2. Its function is as follows. Plays a crucial role in the metabolism of thyroid hormones (TH) and has specific roles in TH activation and inactivation by deiodination. Catalyzes the deiodination of L-thyroxine (T4) to 3,3',5'-triiodothyronine (rT3) and 3,5,3'-triiodothyronine (T3) to 3,3'-diiodothyronine (3,3'-T2) via inner-ring deiodination (IRD). Catalyzes the deiodination of rT3 to 3',5'-diiodothyronine (3',5'-T2), 3,3'-T2 to 3'-monoiodothyronine (3'-T1) and 3,5-diiodothyronine (3,5-T2) to 3-monoiodothyronine (3-T1) via IRD. Catalyzes the deiodination of 3-T1 to L-thyronine (T0) via outer-ring deiodination (ORD). Catalyzes the tyrosyl ring deiodinations of 3,3',5,5'-tetraiodothyronamine, 3,3',5'-triiodothyronamine, 3,5,3'-triiodothyronamine, 3,5-diiodothyronamine, 3,3'-diiodothyronamine and 3-iodothyronamine. The polypeptide is Thyroxine 5-deiodinase (DIO3) (Gallus gallus (Chicken)).